Reading from the N-terminus, the 550-residue chain is Keratin, type II cytoskeletal 74 (550 aa).

The interval 1-140 (MSRQLNIKSG…DPEIQKVRAQ (140 aa)) is head. A coil 1A region spans residues 141–176 (EREQIMALNNKFASFIDKVRFLEQQNQVLGTKWELL). Residues 141 to 468 (EREQIMALNN…KLLEGEECWM (328 aa)) enclose the IF rod domain. Residues 177–195 (QQMDLNNCRKNLEPILEGY) are linker 1. The tract at residues 196–287 (IGNLRKQLEM…CLYDAEVAQI (92 aa)) is coil 1B. Residues 288–311 (QTHTSETSVILSMDNNRYLDLDSI) are linker 12. Positions 312-464 (IAEVRAQYED…ATYSKLLEGE (153 aa)) are coil 2. Positions 465-550 (ECWMSGENPS…VSSRARKAAR (86 aa)) are tail. The tract at residues 491-550 (HPGSSASTDLGASTMASTGTSSSSSTQSGQTRAKGARVGDPKDSQDKSTPVSSRARKAAR) is disordered. Residues 502–521 (ASTMASTGTSSSSSTQSGQT) show a composition bias toward low complexity. The span at 527 to 536 (RVGDPKDSQD) shows a compositional bias: basic and acidic residues.

The protein belongs to the intermediate filament family. In terms of assembly, heterotetramer of two type I and two type II keratins.

Has a role in hair formation. Specific component of keratin intermediate filaments in the inner root sheath (IRS) of the hair follicle. In Bos taurus (Bovine), this protein is Keratin, type II cytoskeletal 74 (KRT74).